The sequence spans 1401 residues: Lysine-specific demethylase 6A (1401 aa).

An interaction with SUPT6H region spans residues 1–1095 (MKSCGVSLAT…TNIDLSDDKK (1095 aa)). 8 TPR repeats span residues 95-128 (SDFF…QSDY), 132-165 (AAFL…DPSF), 169-203 (KEIH…NPCT), 207-240 (AEIQ…ENLS), 245-285 (ATIL…DPNS), 286-319 (GQSW…SEAS), 321-353 (DTWC…DHGH), and 355-387 (AAWM…KNCS). The span at 439–453 (AMNTAQQNTSDNWSG) shows a compositional bias: polar residues. Residues 439 to 463 (AMNTAQQNTSDNWSGGNAPPPVEQQ) form a disordered region. Residues arginine 519 and arginine 549 each carry the omega-N-methylarginine modification. 3 stretches are compositionally biased toward polar residues: residues 596-606 (NHVTGSGSNGN), 619-642 (HNRT…STQG), and 660-743 (LSST…STAS). The tract at residues 596–745 (NHVTGSGSNG…ETPNSTASVE (150 aa)) is disordered. Serine 769 is subject to Phosphoserine. Disordered stretches follow at residues 795–863 (GTCD…EESQ), 914–941 (LLDK…PPTP), and 1043–1080 (FQES…GPFK). Residues 814 to 833 (SVASSPSSAISTATPSPKST) show a composition bias toward low complexity. Threonine 827 is modified (phosphothreonine). Serine 829 carries the phosphoserine modification. The span at 834 to 848 (EQTTTNSVTSLNSPH) shows a compositional bias: polar residues. Positions 918–931 (CPPPRPPSSPYPPL) are enriched in pro residues. Residues 1046–1063 (SLREENEKRSHHKDHSDS) are compositionally biased toward basic and acidic residues. The JmjC domain maps to 1095-1258 (KWKLQLHELT…YKLAVERYEW (164 aa)). Fe cation contacts are provided by histidine 1146, glutamate 1148, and histidine 1226. Zn(2+)-binding residues include cysteine 1331, cysteine 1334, cysteine 1358, and cysteine 1361.

This sequence belongs to the UTX family. In terms of assembly, component of the MLL2/3 complex (also named ASCOM complex), at least composed of KMT2D/MLL2 or KMT2C/MLL3, ASH2L, RBBP5, WDR5, NCOA6, DPY30, KDM6A (or KDM6B), PAXIP1/PTIP, PAGR1 and alpha- and beta-tubulin. Interacts with TLE1. Interacts with SUPT6H. Interacts with SMARCA4. Interacts with PROSER1. L-ascorbate serves as cofactor. It depends on Fe(2+) as a cofactor. Expressed in brain, heart and spleen.

The protein resides in the nucleus. The enzyme catalyses N(6),N(6),N(6)-trimethyl-L-lysyl(27)-[histone H3] + 2 2-oxoglutarate + 2 O2 = N(6)-methyl-L-lysyl(27)-[histone H3] + 2 formaldehyde + 2 succinate + 2 CO2. In terms of biological role, histone demethylase that specifically demethylates 'Lys-27' of histone H3, thereby playing a central role in histone code. Demethylates trimethylated and dimethylated but not monomethylated H3 'Lys-27'. Plays a central role in regulation of posterior development, by regulating HOX gene expression. Demethylation of 'Lys-27' of histone H3 is concomitant with methylation of 'Lys-4' of histone H3, and regulates the recruitment of the PRC1 complex and monoubiquitination of histone H2A. Plays a demethylase-independent role in chromatin remodeling to regulate T-box family member-dependent gene expression. This is Lysine-specific demethylase 6A (Kdm6a) from Mus musculus (Mouse).